A 339-amino-acid polypeptide reads, in one-letter code: Isopentenyl-diphosphate delta-isomerase (339 aa).

7–8 (RK) contacts substrate. FMN is bound by residues S65, 66 to 68 (SMT), S96, and N125. Residue 96–98 (SQR) coordinates substrate. Q160 is a substrate binding site. A Mg(2+)-binding site is contributed by E161. Residues K192, T222, and 293–294 (AG) each bind FMN.

Belongs to the IPP isomerase type 2 family. As to quaternary structure, homooctamer. Dimer of tetramers. FMN is required as a cofactor. It depends on NADPH as a cofactor. The cofactor is Mg(2+).

The protein localises to the cytoplasm. It catalyses the reaction isopentenyl diphosphate = dimethylallyl diphosphate. Involved in the biosynthesis of isoprenoids. Catalyzes the 1,3-allylic rearrangement of the homoallylic substrate isopentenyl (IPP) to its allylic isomer, dimethylallyl diphosphate (DMAPP). The sequence is that of Isopentenyl-diphosphate delta-isomerase from Vibrio parahaemolyticus serotype O3:K6 (strain RIMD 2210633).